We begin with the raw amino-acid sequence, 1800 residues long: U3 small nucleolar RNA-associated protein 10 (1800 aa).

2 HEAT repeats span residues 426–467 (FTQS…TTPA) and 581–619 (DVDLQALLPFLLVALADSSERVRREAAGVLAAIGSLYKK). Helical transmembrane passes span 944–964 (IQSGLSYLLSLTLGSLLAIVN) and 1000–1020 (ALLLVAGLSVIAPELVLHSVM). HEAT repeat units follow at residues 1043–1081 (DQTIDQVVPALIQSLRNQKRDVVSGTSELLLSFTAAFEH), 1250–1288 (TLSLVDFLDTIEVLLQRRNDELRRKVLRLLEGRLRQNPE), 1294–1333 (QHRMLDFLPTLVNIIQSSPDILLKHAAVACIDRIAEKYGR), and 1755–1793 (LALLPEMLPYISELMEDEDENVEREVRKWVKQIEDVLGE).

Belongs to the HEATR1/UTP10 family. In terms of assembly, component of the ribosomal small subunit (SSU) processome.

The protein localises to the nucleus. It localises to the nucleolus. The protein resides in the membrane. Involved in nucleolar processing of pre-18S ribosomal RNA. Involved in ribosome biosynthesis. The chain is U3 small nucleolar RNA-associated protein 10 from Aspergillus niger (strain ATCC MYA-4892 / CBS 513.88 / FGSC A1513).